The sequence spans 375 residues: Actin, cytoplasmic (375 aa).

It belongs to the actin family.

The protein localises to the cytoplasm. It localises to the cytoskeleton. It catalyses the reaction ATP + H2O = ADP + phosphate + H(+). Functionally, actins are highly conserved proteins that are involved in various types of cell motility and are ubiquitously expressed in all eukaryotic cells. This Sterkiella nova (Ciliate) protein is Actin, cytoplasmic.